Consider the following 82-residue polypeptide: MAKYTIVDKDTCIACGACGAAAPDIYDYDDEGIAFVTLDENKGVVEVPEVLEEDMIDAFEGCPTDSIKVADEPFEGDPLKFE.

The 4Fe-4S ferredoxin-type domain maps to 3–31 (KYTIVDKDTCIACGACGAAAPDIYDYDDE). Positions 12, 15, 18, and 62 each coordinate [4Fe-4S] cluster.

It depends on [4Fe-4S] cluster as a cofactor.

Functionally, ferredoxins are iron-sulfur proteins that transfer electrons in a wide variety of metabolic reactions. This ferredoxin may act as a phosphodonor to cytochrome P450 BioI. The chain is Ferredoxin (fer) from Bacillus subtilis (strain 168).